Reading from the N-terminus, the 128-residue chain is Flagellar basal body rod protein FlgB (128 aa).

Belongs to the flagella basal body rod proteins family. As to quaternary structure, the basal body constitutes a major portion of the flagellar organelle and consists of a number of rings mounted on a central rod. In Gram-negative bacteria, at least four rings, L, P, S and M are present, whereas Gram-positive bacteria lack the L and P rings. The rod consists of about 26 subunits of FlgG in the distal portion, and FlgB, FlgC and FlgF build up the proximal portion of the rod with about 6 subunits each. Rod assembly occurs by export via the flagellum-specific pathway of its constituent proteins and by their incorporation into the rod structure in the probable order of FlgB, FlgC, FlgF and FlgG. Another protein, FliE, also assembles onto the stable rod structure.

It is found in the bacterial flagellum basal body. Functionally, structural component of flagellum, the bacterial motility apparatus. Part of the rod structure of flagellar basal body. The sequence is that of Flagellar basal body rod protein FlgB from Cereibacter sphaeroides (strain ATCC 17023 / DSM 158 / JCM 6121 / CCUG 31486 / LMG 2827 / NBRC 12203 / NCIMB 8253 / ATH 2.4.1.) (Rhodobacter sphaeroides).